Reading from the N-terminus, the 160-residue chain is Secreted RxLR effector protein 83 (160 aa).

Residues 1-21 form the signal peptide; sequence MLVLLAATFFIYISRLTSTDA. Residues 27 to 30 carry the RxLR motif; sequence RGLR. N-linked (GlcNAc...) asparagine glycans are attached at residues N39 and N131.

The protein belongs to the RxLR effector family.

Its subcellular location is the secreted. It localises to the host nucleus. The protein resides in the host cytoplasm. Secreted effector that completely suppresses the host cell death induced by cell death-inducing proteins. In Plasmopara viticola (Downy mildew of grapevine), this protein is Secreted RxLR effector protein 83.